A 668-amino-acid chain; its full sequence is Metastasis-associated protein MTA2 (668 aa).

The region spanning Met1 to Gln144 is the BAH domain. Phosphoserine occurs at positions 52 and 54. The region spanning Gly145 to Gly256 is the ELM2 domain. Position 152 is an N6-acetyllysine (Lys152). The SANT domain maps to Asp263–Arg315. The GATA-type; atypical zinc-finger motif lies at Cys367–Cys394. The tract at residues Gly412–Tyr437 is disordered. A phosphoserine mark is found at Ser433 and Ser435. The residue at position 460 (Lys460) is an N6-acetyllysine. Residue Lys492 forms a Glycyl lysine isopeptide (Lys-Gly) (interchain with G-Cter in SUMO2 and SUMO3); alternate linkage. Residue Lys492 forms a Glycyl lysine isopeptide (Lys-Gly) (interchain with G-Cter in SUMO2); alternate linkage. Lys508 is covalently cross-linked (Glycyl lysine isopeptide (Lys-Gly) (interchain with G-Cter in SUMO2)). N6-acetyllysine occurs at positions 522 and 531. A Phosphothreonine modification is found at Thr534. Residues Lys559 and Lys595 each participate in a glycyl lysine isopeptide (Lys-Gly) (interchain with G-Cter in SUMO2) cross-link. Disordered stretches follow at residues Ala580–Ala599 and Pro647–Asp668.

The protein belongs to the metastasis-associated protein family. In terms of assembly, component of the nucleosome remodeling and deacetylase (NuRD) repressor complex, composed of core proteins MTA1, MTA2, MTA3, RBBP4, RBBP7, HDAC1, HDAC2, MBD2, MBD3, and peripherally associated proteins CDK2AP1, CDK2AP2, GATAD2A, GATAD2B, CHD3, CHD4 and CHD5. The exact stoichiometry of the NuRD complex is unknown, and some subunits such as MBD2 and MBD3, GATAD2A and GATAD2B, and CHD3, CHD4 and CHD5 define mutually exclusive NuRD complexes. Interacts with CHD3. Interacts with CHD4. Interacts with GATAD2A. Interacts with HDAC7. Interacts with MBD3. Interacts with p53/TP53. Interacts with MINT. Interacts with PIMREG. Interacts with NACC2. Interacts with ERCC6. Interacts with PWWP2B. Interacts with transcription factor BCL11A.

Its subcellular location is the nucleus. In terms of biological role, may function as a transcriptional coregulator. Acts as a component of the histone deacetylase NuRD complex which participates in the remodeling of chromatin. The chain is Metastasis-associated protein MTA2 (Mta2) from Mus musculus (Mouse).